The chain runs to 616 residues: ATP-dependent zinc metalloprotease FtsH 3 (616 aa).

Over 1-9 (MSKNNKKWR) the chain is Cytoplasmic. A helical transmembrane segment spans residues 10 to 30 (NAGLYALLLIVVLALASAFFD). Topologically, residues 31–108 (RPTQTRETLS…VQPQSDEGFW (78 aa)) are lumenal. Residues 109–129 (FRIASTLFLPILLLVGIFFLF) form a helical membrane-spanning segment. Over 130–616 (RRAQSGPGSQ…NNNAKLALLV (487 aa)) the chain is Cytoplasmic. An ATP-binding site is contributed by 201–208 (GPPGTGKT). Zn(2+) is bound at residue His423. Residue Glu424 is part of the active site. Zn(2+) is bound by residues His427 and Asp504.

This sequence in the central section; belongs to the AAA ATPase family. It in the C-terminal section; belongs to the peptidase M41 family. Homohexamer (Potential). Part of a large complex that includes FtsH2 and PSII. Coimmunoprecipitates with YidC. It depends on Zn(2+) as a cofactor.

It localises to the cellular thylakoid membrane. Functionally, acts as a processive, ATP-dependent zinc metallopeptidase for both cytoplasmic and membrane proteins. Plays a role in the quality control of integral membrane proteins. The protein is ATP-dependent zinc metalloprotease FtsH 3 of Synechocystis sp. (strain ATCC 27184 / PCC 6803 / Kazusa).